The chain runs to 175 residues: Crossover junction endodeoxyribonuclease RuvC (175 aa).

Catalysis depends on residues Asp8, Glu69, and Asp141. Residues Asp8, Glu69, and Asp141 each coordinate Mg(2+).

It belongs to the RuvC family. In terms of assembly, homodimer which binds Holliday junction (HJ) DNA. The HJ becomes 2-fold symmetrical on binding to RuvC with unstacked arms; it has a different conformation from HJ DNA in complex with RuvA. In the full resolvosome a probable DNA-RuvA(4)-RuvB(12)-RuvC(2) complex forms which resolves the HJ. The cofactor is Mg(2+).

It is found in the cytoplasm. It carries out the reaction Endonucleolytic cleavage at a junction such as a reciprocal single-stranded crossover between two homologous DNA duplexes (Holliday junction).. Its function is as follows. The RuvA-RuvB-RuvC complex processes Holliday junction (HJ) DNA during genetic recombination and DNA repair. Endonuclease that resolves HJ intermediates. Cleaves cruciform DNA by making single-stranded nicks across the HJ at symmetrical positions within the homologous arms, yielding a 5'-phosphate and a 3'-hydroxyl group; requires a central core of homology in the junction. The consensus cleavage sequence is 5'-(A/T)TT(C/G)-3'. Cleavage occurs on the 3'-side of the TT dinucleotide at the point of strand exchange. HJ branch migration catalyzed by RuvA-RuvB allows RuvC to scan DNA until it finds its consensus sequence, where it cleaves and resolves the cruciform DNA. The polypeptide is Crossover junction endodeoxyribonuclease RuvC (Colwellia psychrerythraea (strain 34H / ATCC BAA-681) (Vibrio psychroerythus)).